A 529-amino-acid chain; its full sequence is uncharacterized protein (529 aa).

Residues 1 to 11 (MSSSKIKELRE) are compositionally biased toward basic and acidic residues. Disordered stretches follow at residues 1-222 (MSSS…IPYS), 237-256 (PFLESKVLPQNNETSDEENV), 271-372 (AFLQ…TAAP), and 393-488 (GSGN…PSFT). The span at 27–40 (MQQNQPRPATTTPP) shows a compositional bias: polar residues. The segment covering 83–95 (TKGRAHPRSRRPP) has biased composition (basic residues). The segment covering 110–125 (NTGSTKAADTKSSVEA) has biased composition (polar residues). S128 carries the phosphoserine modification. Positions 170–199 (TTKAVEATTSKASSAHTDTLATSASNSDRG) are enriched in polar residues. S217 carries the phosphoserine modification. The segment covering 237–249 (PFLESKVLPQNNE) has biased composition (polar residues). Low complexity predominate over residues 321–334 (SSPLSFSASKSPAA). Residues 336 to 362 (DSSTKTPTEQVNVVSKQAPTTSSTSVI) are compositionally biased toward polar residues. A compositionally biased stretch (basic and acidic residues) spans 409–426 (ERTKSLSKESPVEPEKPA). Over residues 430-455 (ATSSSTPTTENKESWTNQGIKSSQQR) the composition is skewed to polar residues. Positions 456-470 (SANASPATSPSNQAS) are enriched in low complexity. A compositionally biased stretch (polar residues) spans 471-488 (IHASFTKESSTHSSPSFT).

Its subcellular location is the cytoplasm. This is an uncharacterized protein from Schizosaccharomyces pombe (strain 972 / ATCC 24843) (Fission yeast).